Consider the following 933-residue polypeptide: Isoleucine--tRNA ligase (933 aa).

The short motif at proline 57–histidine 67 is the 'HIGH' region element. Glutamate 554 lines the L-isoleucyl-5'-AMP pocket. The 'KMSKS' region signature appears at lysine 595–serine 599. Lysine 598 provides a ligand contact to ATP.

It belongs to the class-I aminoacyl-tRNA synthetase family. IleS type 1 subfamily. Monomer.

It is found in the cytoplasm. The catalysed reaction is tRNA(Ile) + L-isoleucine + ATP = L-isoleucyl-tRNA(Ile) + AMP + diphosphate. Its function is as follows. Catalyzes the attachment of isoleucine to tRNA(Ile). As IleRS can inadvertently accommodate and process structurally similar amino acids such as valine, to avoid such errors it has two additional distinct tRNA(Ile)-dependent editing activities. One activity is designated as 'pretransfer' editing and involves the hydrolysis of activated Val-AMP. The other activity is designated 'posttransfer' editing and involves deacylation of mischarged Val-tRNA(Ile). This is Isoleucine--tRNA ligase from Streptococcus pyogenes serotype M28 (strain MGAS6180).